The primary structure comprises 700 residues: Polyribonucleotide nucleotidyltransferase (700 aa).

Asp-486 and Asp-492 together coordinate Mg(2+). The KH domain maps to 554-613 (PKIISTTINPDKIREVIGPGGKMINKIIDETGVKIDINDDGRVYIFSSDIQAGKRARSMI). The 69-residue stretch at 623 to 691 (GQVFLGRVIR…KQGRVNLSRK (69 aa)) folds into the S1 motif domain.

The protein belongs to the polyribonucleotide nucleotidyltransferase family. The cofactor is Mg(2+).

It localises to the cytoplasm. The enzyme catalyses RNA(n+1) + phosphate = RNA(n) + a ribonucleoside 5'-diphosphate. In terms of biological role, involved in mRNA degradation. Catalyzes the phosphorolysis of single-stranded polyribonucleotides processively in the 3'- to 5'-direction. This chain is Polyribonucleotide nucleotidyltransferase, found in Acetivibrio thermocellus (strain ATCC 27405 / DSM 1237 / JCM 9322 / NBRC 103400 / NCIMB 10682 / NRRL B-4536 / VPI 7372) (Clostridium thermocellum).